We begin with the raw amino-acid sequence, 337 residues long: Ribosomal RNA small subunit methyltransferase C (337 aa).

This sequence belongs to the methyltransferase superfamily. RsmC family. Monomer.

The protein resides in the cytoplasm. The enzyme catalyses guanosine(1207) in 16S rRNA + S-adenosyl-L-methionine = N(2)-methylguanosine(1207) in 16S rRNA + S-adenosyl-L-homocysteine + H(+). In terms of biological role, specifically methylates the guanine in position 1207 of 16S rRNA in the 30S particle. The protein is Ribosomal RNA small subunit methyltransferase C of Proteus mirabilis (strain HI4320).